The following is an 887-amino-acid chain: Valine--tRNA ligase (887 aa).

Positions 48–58 match the 'HIGH' region motif; the sequence is PNVTGVLHVGH. Residues 527–531 carry the 'KMSKS' region motif; that stretch reads KMSKS. K530 is an ATP binding site. The stretch at 814 to 887 forms a coiled coil; sequence LAGLVDIEAE…EASDRLKKLS (74 aa).

It belongs to the class-I aminoacyl-tRNA synthetase family. ValS type 1 subfamily. Monomer.

It localises to the cytoplasm. It carries out the reaction tRNA(Val) + L-valine + ATP = L-valyl-tRNA(Val) + AMP + diphosphate. Functionally, catalyzes the attachment of valine to tRNA(Val). As ValRS can inadvertently accommodate and process structurally similar amino acids such as threonine, to avoid such errors, it has a 'posttransfer' editing activity that hydrolyzes mischarged Thr-tRNA(Val) in a tRNA-dependent manner. The protein is Valine--tRNA ligase of Desulfotalea psychrophila (strain LSv54 / DSM 12343).